Consider the following 149-residue polypeptide: Limonene-1,2-epoxide hydrolase (149 aa).

Aspartate 101 serves as the catalytic Proton donor. The Proton acceptor role is filled by aspartate 132.

This sequence belongs to the limonene-1,2-epoxide hydrolase family. Monomer.

The enzyme catalyses limonene 1,2-epoxide + H2O = limonene-1,2-diol. It functions in the pathway terpene metabolism; (4R)-limonene degradation; (1S,4R)-1-hydroxylimonen-2-one from (4R)-limonene: step 2/3. Its function is as follows. Catalyzes the conversion of limonene-1,2-epoxide to limonene-1,2-diol. Can use both the (-) and (+) isomers of limonene-1,2-epoxide as substrates and also has some activity with 1-methylcyclohexene oxide, cyclohexene oxide and indene oxide as substrates. The chain is Limonene-1,2-epoxide hydrolase (limA) from Rhodococcus erythropolis (Arthrobacter picolinophilus).